Consider the following 339-residue polypeptide: Cyclic AMP-dependent transcription factor ATF-4 (339 aa).

Disordered regions lie at residues 14–62 (GPWP…PSEL), 153–182 (PEEI…HTEV), and 209–313 (QNIS…EKAD). The span at 35-55 (VLEGSWSPSSSSLSSFSPPAS) shows a compositional bias: low complexity. Residues 162–173 (SPAPSVPSPPEE) are compositionally biased toward pro residues. The span at 211–226 (ISDCSDSDSGISVSGS) shows a compositional bias: low complexity. Positions 231-247 (SDLEPSSRAKPYSRPDP) are enriched in basic and acidic residues. The bZIP domain occupies 266 to 329 (VEKKLKKMEQ…QYLRDLLEEM (64 aa)). The interval 268–288 (KKLKKMEQNKTAATRYRQKKR) is basic motif. Residues 294–322 (LNSECSELEKKNRELSEKADSLSREIQYL) are leucine-zipper. Over residues 300–313 (ELEKKNRELSEKAD) the composition is skewed to basic and acidic residues.

Belongs to the bZIP family. In terms of assembly, binds DNA as a homodimer and as a heterodimer.

It is found in the nucleus. In terms of biological role, transcription factor that binds the cAMP response element (CRE) (consensus: 5'-GTGACGT[AC][AG]-3') and displays two biological functions, as regulator of metabolic and redox processes under normal cellular conditions, and as master transcription factor during integrated stress response (ISR). Binds to asymmetric CRE's as a heterodimer and to palindromic CRE's as a homodimer. Core effector of the ISR, which is required for adaptation to various stress such as endoplasmic reticulum (ER) stress, amino acid starvation, mitochondrial stress or oxidative stress. During ISR, atf4 translation is induced via an alternative ribosome translation re-initiation mechanism in response to eif2s1/eIF-2-alpha phosphorylation, and stress-induced atf4 acts as a master transcription factor of stress-responsive genes in order to promote cell recovery. Promotes the transcription of genes linked to amino acid sufficiency and resistance to oxidative stress to protect cells against metabolic consequences of ER oxidation. In the absence of stress, atf4 translation is at low levels and it is required for normal metabolic processes such as embryonic lens formation, fetal liver hematopoiesis, bone development and synaptic plasticity. Acts as a regulator of osteoblast differentiation by promoting expression of osteoblast-specific genes. Regulates the circadian expression of the core clock components. Mainly acts as a transcriptional activator in cellular stress adaptation, but it can also act as a transcriptional repressor. The sequence is that of Cyclic AMP-dependent transcription factor ATF-4 (atf4) from Danio rerio (Zebrafish).